The primary structure comprises 170 residues: MSISLNYSATRDPLSALGLDVGNRRIGVAGSDRLGLLATGLGVIQRRSLSEDIAQVQEWIRRRQATVVVVGIPLLADGSVGSQARKVQRFVRALQVAVDLPIVTVNEYLSTAQAEWDLREAGIPAKAQKGLIDQQSAAVILQTWLDERRASLSEVPAWQSWGNKDYAGEV.

This sequence belongs to the YqgF nuclease family.

The protein resides in the cytoplasm. Could be a nuclease involved in processing of the 5'-end of pre-16S rRNA. The polypeptide is Putative pre-16S rRNA nuclease (Synechococcus sp. (strain JA-2-3B'a(2-13)) (Cyanobacteria bacterium Yellowstone B-Prime)).